Consider the following 265-residue polypeptide: Transcription factor LBX1b (265 aa).

A DNA-binding region (homeobox) is located at residues Arg121–Leu180.

It is found in the nucleus. In terms of biological role, transcription factor required for the development of hypaxial muscles. This chain is Transcription factor LBX1b, found in Danio rerio (Zebrafish).